The primary structure comprises 246 residues: MTFAATILTLYPEMFPGPLGVSLAGRALAEGKWSCDPVQIRDFATDRHRSVDDTPAGGGAGMVMRADVLARAVDHALETRPDSPLLAMTPRGAPLTQARVRQLAAGPGVTILCGRFEGIDERLFEARPIEPVSIGDYILSGGEMGALVLLDACIRLLPGVMGAPDSGDEESFESGLLEYPHYTRPAEWEGRTIPEVLRSGDHARIEAWRNAMAETDTRLRRPDLWERHEGARAQSPSGARRQKKER.

S-adenosyl-L-methionine is bound by residues Gly114 and 134 to 139; that span reads IGDYIL. Residues 219-231 are compositionally biased toward basic and acidic residues; sequence LRRPDLWERHEGA. The disordered stretch occupies residues 219–246; that stretch reads LRRPDLWERHEGARAQSPSGARRQKKER.

This sequence belongs to the RNA methyltransferase TrmD family. Homodimer.

Its subcellular location is the cytoplasm. It catalyses the reaction guanosine(37) in tRNA + S-adenosyl-L-methionine = N(1)-methylguanosine(37) in tRNA + S-adenosyl-L-homocysteine + H(+). In terms of biological role, specifically methylates guanosine-37 in various tRNAs. The chain is tRNA (guanine-N(1)-)-methyltransferase from Rhizorhabdus wittichii (strain DSM 6014 / CCUG 31198 / JCM 15750 / NBRC 105917 / EY 4224 / RW1) (Sphingomonas wittichii).